The chain runs to 456 residues: SWI/SNF complex component SNF12 homolog (456 aa).

The SWIB/MDM2 domain occupies 234 to 310; it reads HVPQKYKVLG…PQLLREHLSP (77 aa). The tract at residues 435–456 is disordered; the sequence is KQTTPNPTPQQISMAPSTPQTP.

The protein belongs to the SMARCD family. As to quaternary structure, part of a SWI-SNF complex.

Its subcellular location is the nucleus. Its function is as follows. Involved in transcriptional activation and repression of select genes by chromatin remodeling (alteration of DNA-nucleosome topology). In Dictyostelium discoideum (Social amoeba), this protein is SWI/SNF complex component SNF12 homolog (snf12-1).